Consider the following 102-residue polypeptide: Small ribosomal subunit protein uS14 (102 aa).

The protein belongs to the universal ribosomal protein uS14 family. As to quaternary structure, part of the 30S ribosomal subunit. Contacts proteins S3 and S10.

Binds 16S rRNA, required for the assembly of 30S particles and may also be responsible for determining the conformation of the 16S rRNA at the A site. The sequence is that of Small ribosomal subunit protein uS14 from Ehrlichia ruminantium (strain Gardel).